Reading from the N-terminus, the 140-residue chain is Small ribosomal subunit protein uS19 (140 aa).

Residues 55–74 are disordered; sequence LAEARESGTEETANNPIRTH.

It belongs to the universal ribosomal protein uS19 family.

Its function is as follows. Protein S19 forms a complex with S13 that binds strongly to the 16S ribosomal RNA. This is Small ribosomal subunit protein uS19 from Halobacterium salinarum (strain ATCC 29341 / DSM 671 / R1).